The chain runs to 210 residues: PEP-dependent dihydroxyacetone kinase, ADP-binding subunit DhaL (210 aa).

One can recognise a DhaL domain in the interval 6–206 (TQIVNWLTRC…VMFMMQMLAL (201 aa)). Mg(2+) contacts are provided by Asp30, Asp35, and Asp37. ADP-binding positions include 38-41 (HGLN), 79-80 (AS), Gly121, Met130, Arg178, and 191-193 (DPG).

In terms of assembly, homodimer. The dihydroxyacetone kinase complex is composed of a homodimer of DhaM, a homodimer of DhaK and the subunit DhaL. DhaL also forms a complex with DhaR. Requires Mg(2+) as cofactor.

Its subcellular location is the cytoplasm. The enzyme catalyses dihydroxyacetone + phosphoenolpyruvate = dihydroxyacetone phosphate + pyruvate. The protein operates within polyol metabolism; glycerol degradation. Functionally, ADP-binding subunit of the dihydroxyacetone kinase, which is responsible for the phosphoenolpyruvate (PEP)-dependent phosphorylation of dihydroxyacetone. DhaL-ADP is converted to DhaL-ATP via a phosphoryl group transfer from DhaM and transmits it to dihydroxyacetone bound to DhaK. DhaL also acts as coactivator of the transcription activator DhaR by binding to the sensor domain of DhaR. In the presence of dihydroxyacetone, DhaL-ADP displaces DhaK and stimulates DhaR activity. In the absence of dihydroxyacetone, DhaL-ADP is converted by the PTS to DhaL-ATP, which does not bind to DhaR. The protein is PEP-dependent dihydroxyacetone kinase, ADP-binding subunit DhaL of Escherichia coli (strain K12).